Reading from the N-terminus, the 439-residue chain is Ribosomal protein uS12 methylthiotransferase RimO (439 aa).

The region spanning 5–116 (PTIAISHLGC…IVNVIERVEL (112 aa)) is the MTTase N-terminal domain. Residues cysteine 14, cysteine 50, cysteine 79, cysteine 154, cysteine 158, and cysteine 161 each contribute to the [4Fe-4S] cluster site. In terms of domain architecture, Radical SAM core spans 140-369 (TTTEGVAYLR…MELQQPISQK (230 aa)). Residues 372–438 (QQEVGKIVDV…TYDLYGQVVN (67 aa)) form the TRAM domain.

The protein belongs to the methylthiotransferase family. RimO subfamily. [4Fe-4S] cluster is required as a cofactor.

The protein resides in the cytoplasm. The enzyme catalyses L-aspartate(89)-[ribosomal protein uS12]-hydrogen + (sulfur carrier)-SH + AH2 + 2 S-adenosyl-L-methionine = 3-methylsulfanyl-L-aspartate(89)-[ribosomal protein uS12]-hydrogen + (sulfur carrier)-H + 5'-deoxyadenosine + L-methionine + A + S-adenosyl-L-homocysteine + 2 H(+). Functionally, catalyzes the methylthiolation of an aspartic acid residue of ribosomal protein uS12. This is Ribosomal protein uS12 methylthiotransferase RimO from Nostoc punctiforme (strain ATCC 29133 / PCC 73102).